Here is a 361-residue protein sequence, read N- to C-terminus: S-adenosylmethionine:tRNA ribosyltransferase-isomerase (361 aa).

The protein belongs to the QueA family. As to quaternary structure, monomer.

It is found in the cytoplasm. The catalysed reaction is 7-aminomethyl-7-carbaguanosine(34) in tRNA + S-adenosyl-L-methionine = epoxyqueuosine(34) in tRNA + adenine + L-methionine + 2 H(+). It functions in the pathway tRNA modification; tRNA-queuosine biosynthesis. In terms of biological role, transfers and isomerizes the ribose moiety from AdoMet to the 7-aminomethyl group of 7-deazaguanine (preQ1-tRNA) to give epoxyqueuosine (oQ-tRNA). The sequence is that of S-adenosylmethionine:tRNA ribosyltransferase-isomerase from Rhizobium etli (strain ATCC 51251 / DSM 11541 / JCM 21823 / NBRC 15573 / CFN 42).